The following is a 444-amino-acid chain: NEDD8-activating enzyme E1 catalytic subunit (444 aa).

54-78 (GLGCEILKDLALSGFRDLSVIDMDT) contributes to the ATP binding site. The active-site Glycyl thioester intermediate is the Cys205.

The protein belongs to the ubiquitin-activating E1 family. UBA3 subfamily. Heterodimer of uba3 and ula1. Interacts with NEDD8 and ubc12. Interacts with but1 and but2.

It catalyses the reaction ATP + [NEDD8 protein] + [E1 NEDD8-activating enzyme]-L-cysteine = AMP + diphosphate + [E1 NEDD8-activating enzyme]-S-[NEDD8 protein]-yl-L-cysteine.. The protein operates within protein modification; protein neddylation. In terms of biological role, catalytic subunit of the dimeric uba3-ula1 E1 enzyme. E1 activates NEDD8/ubl1 by first adenylating its C-terminal glycine residue with ATP, thereafter linking this residue to the side chain of the catalytic cysteine, yielding a NEDD8-uba3 thioester and free AMP. E1 finally transfers NEDD8 to the catalytic cysteine of ubc12. This chain is NEDD8-activating enzyme E1 catalytic subunit (uba3), found in Schizosaccharomyces pombe (strain 972 / ATCC 24843) (Fission yeast).